Consider the following 383-residue polypeptide: E3 ubiquitin-protein ligase SPL2 (383 aa).

The Cytoplasmic segment spans residues 1 to 14 (MSSPERALLNLLTD). A helical membrane pass occupies residues 15–35 (IALSFDGAILGLTLAVSAVGS). Residues 36–269 (ALKYASTNAA…MIEDLMEQTN (234 aa)) lie on the Chloroplast intermembrane side of the membrane. A helical transmembrane segment spans residues 270–290 (FIFLGSVILGIVSVGILSYAA). Residues 291–383 (VRTWNKWKQW…IRGSMRVYYS (93 aa)) lie on the Cytoplasmic side of the membrane. The segment at 331 to 370 (CVICVSRRRVPAFIPCGHVVCCRRCASTVERELNPKCPVC) adopts an RING-type zinc-finger fold.

Its subcellular location is the plastid. It localises to the chloroplast outer membrane. The catalysed reaction is S-ubiquitinyl-[E2 ubiquitin-conjugating enzyme]-L-cysteine + [acceptor protein]-L-lysine = [E2 ubiquitin-conjugating enzyme]-L-cysteine + N(6)-ubiquitinyl-[acceptor protein]-L-lysine.. Its pathway is protein modification; protein ubiquitination. In terms of biological role, possesses E3 ubiquitin-protein ligase activity. This Arabidopsis thaliana (Mouse-ear cress) protein is E3 ubiquitin-protein ligase SPL2.